The chain runs to 156 residues: Transcriptional repressor NrdR (156 aa).

A zinc finger lies at C3–C34. One can recognise an ATP-cone domain in the interval V49–Q139.

Belongs to the NrdR family. Requires Zn(2+) as cofactor.

In terms of biological role, negatively regulates transcription of bacterial ribonucleotide reductase nrd genes and operons by binding to NrdR-boxes. This chain is Transcriptional repressor NrdR, found in Thermotoga maritima (strain ATCC 43589 / DSM 3109 / JCM 10099 / NBRC 100826 / MSB8).